Consider the following 307-residue polypeptide: tRNA pseudouridine synthase B (307 aa).

Aspartate 41 functions as the Nucleophile in the catalytic mechanism.

This sequence belongs to the pseudouridine synthase TruB family. Type 1 subfamily.

It catalyses the reaction uridine(55) in tRNA = pseudouridine(55) in tRNA. In terms of biological role, responsible for synthesis of pseudouridine from uracil-55 in the psi GC loop of transfer RNAs. The sequence is that of tRNA pseudouridine synthase B from Prochlorococcus marinus (strain MIT 9312).